Here is a 40-residue protein sequence, read N- to C-terminus: Snaclec tokaracetin subunit alpha (40 aa).

The C-type lectin domain occupies 1–40; that stretch reads DCPSGWSSFKQYCYKPFKQLKTWEDAERFCLEQVKGAHLV. The cysteines at positions 2 and 13 are disulfide-linked.

The protein belongs to the snaclec family. As to quaternary structure, heterodimer of subunits alpha and beta; disulfide-linked. In terms of tissue distribution, expressed by the venom gland.

Its subcellular location is the secreted. Its function is as follows. Platelet antagonist that specifically and reversibly binds to a site on platelet glycoprotein Ibalpha (GP1BA) close to or identical with the site for vWF binding. It inhibits the binding of vWF to platelets and vWF-dependent shear-induced platelet aggregation. This is Snaclec tokaracetin subunit alpha from Protobothrops tokarensis (Tokara habu).